Here is an 89-residue protein sequence, read N- to C-terminus: UPF0335 protein Nham_1221 (89 aa).

The protein belongs to the UPF0335 family.

This Nitrobacter hamburgensis (strain DSM 10229 / NCIMB 13809 / X14) protein is UPF0335 protein Nham_1221.